A 331-amino-acid polypeptide reads, in one-letter code: UPF0324 membrane protein SERP0111 (331 aa).

Transmembrane regions (helical) follow at residues 7–26, 31–48, 69–88, 93–115, 122–144, 154–176, 183–205, 249–271, 275–297, and 308–330; these read ASFM…SYIL, ILHT…AMIY, LLKF…DILG, LLLI…NQII, SILL…APIL, SVGI…EAIF, YGAW…GIGG, IPYF…IPSL, IINV…NIVL, and FIVI…SIMF.

This sequence belongs to the UPF0324 family.

The protein localises to the cell membrane. The polypeptide is UPF0324 membrane protein SERP0111 (Staphylococcus epidermidis (strain ATCC 35984 / DSM 28319 / BCRC 17069 / CCUG 31568 / BM 3577 / RP62A)).